A 292-amino-acid polypeptide reads, in one-letter code: Protease HtpX (292 aa).

Helical transmembrane passes span 4–24 (IVLF…ILFL) and 32–52 (IYGL…LSLI). His-139 is a binding site for Zn(2+). The active site involves Glu-140. Residue His-143 coordinates Zn(2+). 2 helical membrane passes run 147–167 (GDMI…IFIS) and 193–213 (FVYF…ASII). Residue Glu-222 participates in Zn(2+) binding.

Belongs to the peptidase M48B family. Requires Zn(2+) as cofactor.

The protein localises to the cell membrane. The protein is Protease HtpX of Buchnera aphidicola subsp. Acyrthosiphon pisum (strain 5A).